The chain runs to 157 residues: Small ribosomal subunit protein uS7 (157 aa).

Belongs to the universal ribosomal protein uS7 family. In terms of assembly, part of the 30S ribosomal subunit. Contacts proteins S9 and S11.

In terms of biological role, one of the primary rRNA binding proteins, it binds directly to 16S rRNA where it nucleates assembly of the head domain of the 30S subunit. Is located at the subunit interface close to the decoding center, probably blocks exit of the E-site tRNA. The chain is Small ribosomal subunit protein uS7 from Protochlamydia amoebophila (strain UWE25).